The chain runs to 292 residues: Protease HtpX (292 aa).

2 helical membrane-spanning segments follow: residues Ile-4–Leu-24 and Gly-34–Ser-54. His-139 contacts Zn(2+). The active site involves Glu-140. Residue His-143 coordinates Zn(2+). Transmembrane regions (helical) follow at residues Ile-158–Leu-178 and Met-192–Ile-212. Zn(2+) is bound at residue Glu-221.

The protein belongs to the peptidase M48B family. Requires Zn(2+) as cofactor.

The protein resides in the cell inner membrane. The chain is Protease HtpX from Serratia proteamaculans (strain 568).